The sequence spans 457 residues: Protein unc-93 homolog A (457 aa).

The next 5 helical transmembrane spans lie at 8–28 (VLVVSFGFLLLFTAYGGLQSL), 42–62 (ALSTLYGGMLLSSMFLPPLLI), 65–85 (LGCKGTIILSMCGYVAFSVGN), 86–106 (FFASWYTLIPTSILLGLGAAP), and 140–160 (IFFLIFQSSGVWGNLISSLVF). Residue Asn-190 is glycosylated (N-linked (GlcNAc...) asparagine). The next 6 helical transmembrane spans lie at 202–222 (TLLGIYTGSGVLAVLMIAAFL), 257–277 (LCLLILLPLYSGLQQGFLSSE), 291–311 (FVGYVMICFSATDALCSVLYG), 320–340 (AVLYVLGAVTHVSCMIALLLW), 344–364 (ADHLAVFFVFSGLWGVADAVW), and 395–415 (FVIAFGYSMFLCVHVKLYILL).

It belongs to the unc-93 family. Expressed in testis, small intestine, spleen, prostate and ovary.

Its subcellular location is the cell membrane. This chain is Protein unc-93 homolog A (UNC93A), found in Homo sapiens (Human).